Reading from the N-terminus, the 141-residue chain is MAKEVIQIIKLQLPAGKANPAPPVGPALGQHGVNIMEFCKAFNAKTQDKAGWIIPVEISVYSDRSFTFILKTPPASDLLKKAAGITSGAKNSKKEVAGKITTAKLKELAETKMPDLNASSVETAMKIIAGSARSMGIKIED.

It belongs to the universal ribosomal protein uL11 family. In terms of assembly, part of the ribosomal stalk of the 50S ribosomal subunit. Interacts with L10 and the large rRNA to form the base of the stalk. L10 forms an elongated spine to which L12 dimers bind in a sequential fashion forming a multimeric L10(L12)X complex. Post-translationally, one or more lysine residues are methylated.

Functionally, forms part of the ribosomal stalk which helps the ribosome interact with GTP-bound translation factors. The sequence is that of Large ribosomal subunit protein uL11 from Fusobacterium nucleatum subsp. nucleatum (strain ATCC 25586 / DSM 15643 / BCRC 10681 / CIP 101130 / JCM 8532 / KCTC 2640 / LMG 13131 / VPI 4355).